We begin with the raw amino-acid sequence, 293 residues long: MTALDTLERVETAEIEKPIMQDKQIARGVEKITKTVGVPLTENAKFGIRGVDVFYGEKQAVFNVDLDIAKNQVIAMIGPSGCGKSTFLRCLNRMNDTIDICRVSGSITLDGMDIYDKQLDVVPLRARVGMVFQKPNPFPKSIYENVAYGPKIHGLASRRSDLDEIVETSLKKAGLWNEVKDRLHAPGTGLSGGQQQRLCIARTIAVSPEVILMDEPCSALDPIATAKIEELIAELSENFTIAIVTHSMQQAARVSHRTAYFHMGRLVEVNDTEKVFTNPDHELTEAYITGRFG.

Residues 46–288 (FGIRGVDVFY…PDHELTEAYI (243 aa)) form the ABC transporter domain. Position 78-85 (78-85 (GPSGCGKS)) interacts with ATP.

This sequence belongs to the ABC transporter superfamily. Phosphate importer (TC 3.A.1.7) family. The complex is composed of two ATP-binding proteins (PstB), two transmembrane proteins (PstC and PstA) and a solute-binding protein (PstS).

Its subcellular location is the cell inner membrane. The catalysed reaction is phosphate(out) + ATP + H2O = ADP + 2 phosphate(in) + H(+). Part of the ABC transporter complex PstSACB involved in phosphate import. Responsible for energy coupling to the transport system. This chain is Phosphate import ATP-binding protein PstB, found in Saccharophagus degradans (strain 2-40 / ATCC 43961 / DSM 17024).